Consider the following 479-residue polypeptide: Bifunctional AAC/APH (479 aa).

The region spanning 8 to 180 (ICIRTLIDDD…DCYLMEYRYD (173 aa)) is the N-acetyltransferase domain. Residues 110–153 (KGIGTRYIKLIFEFLKKERNANAVILDPHKNNPRAIRAYQKSGF) form an acetyl-CoA binding site region. Residue Asp-374 is the Proton acceptor; for phosphotransferase activity of the active site. Asp-393 lines the a gentamycin pocket.

In the C-terminal section; belongs to the aminoglycoside phosphotransferase family.

Its subcellular location is the cytoplasm. It catalyses the reaction a gentamycin + GTP = a gentamycin 2''-phosphate + GDP + H(+). Involved in resistance to gentamicin, tobramycin, and kanamycin. Tobramycin and kanamycin resistance is due to the ACC activity, specified by N-terminal region. The C-terminal region is a kinase that phosphorylates several 4,6-disubstituted aminoglycosides. The polypeptide is Bifunctional AAC/APH (aacA-aphD) (Enterococcus faecalis (strain ATCC 700802 / V583)).